Reading from the N-terminus, the 193-residue chain is Peptidyl-tRNA hydrolase (193 aa).

His17 is a tRNA binding site. The Proton acceptor role is filled by His22. 3 residues coordinate tRNA: Phe68, Asn70, and Asn116.

Belongs to the PTH family. As to quaternary structure, monomer.

It localises to the cytoplasm. It carries out the reaction an N-acyl-L-alpha-aminoacyl-tRNA + H2O = an N-acyl-L-amino acid + a tRNA + H(+). Hydrolyzes ribosome-free peptidyl-tRNAs (with 1 or more amino acids incorporated), which drop off the ribosome during protein synthesis, or as a result of ribosome stalling. Its function is as follows. Catalyzes the release of premature peptidyl moieties from peptidyl-tRNA molecules trapped in stalled 50S ribosomal subunits, and thus maintains levels of free tRNAs and 50S ribosomes. The polypeptide is Peptidyl-tRNA hydrolase (Xanthomonas campestris pv. campestris (strain ATCC 33913 / DSM 3586 / NCPPB 528 / LMG 568 / P 25)).